The following is a 451-amino-acid chain: Trigger factor (451 aa).

The PPIase FKBP-type domain maps to 165 to 250 (DDKLTIDFEG…LHQIQAREAL (86 aa)).

The protein belongs to the FKBP-type PPIase family. Tig subfamily.

It is found in the cytoplasm. It carries out the reaction [protein]-peptidylproline (omega=180) = [protein]-peptidylproline (omega=0). In terms of biological role, involved in protein export. Acts as a chaperone by maintaining the newly synthesized protein in an open conformation. Functions as a peptidyl-prolyl cis-trans isomerase. This is Trigger factor from Helicobacter pylori (strain G27).